The following is a 205-amino-acid chain: Holliday junction branch migration complex subunit RuvA (205 aa).

Positions 1–64 (MIGHIQGVLT…EDAQLLYGFI (64 aa)) are domain I. Residues 65–143 (SASERSLFRL…DWQPSTPFTD (79 aa)) form a domain II region. Residues 136–157 (QPSTPFTDRAPLDSQGMDAREH) form a disordered region. Residues 144 to 156 (RAPLDSQGMDARE) are flexible linker. Residues 157-205 (HPADARTDAISALQSLGYKENQAEKALQKVYSAEHNSETLIRLALKQLS) form a domain III region.

It belongs to the RuvA family. In terms of assembly, homotetramer. Forms an RuvA(8)-RuvB(12)-Holliday junction (HJ) complex. HJ DNA is sandwiched between 2 RuvA tetramers; dsDNA enters through RuvA and exits via RuvB. An RuvB hexamer assembles on each DNA strand where it exits the tetramer. Each RuvB hexamer is contacted by two RuvA subunits (via domain III) on 2 adjacent RuvB subunits; this complex drives branch migration. In the full resolvosome a probable DNA-RuvA(4)-RuvB(12)-RuvC(2) complex forms which resolves the HJ.

The protein localises to the cytoplasm. In terms of biological role, the RuvA-RuvB-RuvC complex processes Holliday junction (HJ) DNA during genetic recombination and DNA repair, while the RuvA-RuvB complex plays an important role in the rescue of blocked DNA replication forks via replication fork reversal (RFR). RuvA specifically binds to HJ cruciform DNA, conferring on it an open structure. The RuvB hexamer acts as an ATP-dependent pump, pulling dsDNA into and through the RuvAB complex. HJ branch migration allows RuvC to scan DNA until it finds its consensus sequence, where it cleaves and resolves the cruciform DNA. The protein is Holliday junction branch migration complex subunit RuvA of Idiomarina loihiensis (strain ATCC BAA-735 / DSM 15497 / L2-TR).